A 388-amino-acid polypeptide reads, in one-letter code: Fibrinogen- and Ig-binding protein (388 aa).

The first 41 residues, 1–41 (MSKTNPNKLYSLRKLKTGTASVAVDLTVLGTGLANTTDVKA), serve as a signal peptide directing secretion. D repeat units follow at residues 288–293 (EKLEAE), 294–299 (AKALKE), 302–307 (AKQAEE), and 309–314 (AKLKAD). Residues 308–362 (LAKLKADKASGAQKPDTKPGNKEVPTRPSQTRTNTNKAPMAQTKRQLPSTGEETT) form a disordered region. Residues 322–332 (PDTKPGNKEVP) are compositionally biased toward basic and acidic residues. Positions 334–362 (RPSQTRTNTNKAPMAQTKRQLPSTGEETT) are enriched in polar residues. The short motif at 354–358 (LPSTG) is the LPXTG sorting signal element. Threonine 357 carries the post-translational modification Pentaglycyl murein peptidoglycan amidated threonine. A propeptide spans 358–388 (GEETTNPFFTAAALTVIASAGVLALKRKEEN) (removed by sortase).

The protein localises to the secreted. It is found in the cell wall. In terms of biological role, binds IgG molecules of the Ig1, Ig2 and Ig4 subclasses, and also binds fibrinogen. This Streptococcus pyogenes protein is Fibrinogen- and Ig-binding protein (mrp4).